The chain runs to 114 residues: Probable acid stress chaperone HdeA (114 aa).

Residues 1–26 (MIKTLFNKNTALAAVAILALSGSAMA) form the signal peptide. The cysteines at positions 46 and 94 are disulfide-linked.

Belongs to the HdeA family.

It localises to the periplasm. Required for optimal acid stress protection. Exhibits a chaperone-like activity only at low pH by suppressing non-specifically the aggregation of denaturated periplasmic proteins. This Brucella ovis (strain ATCC 25840 / 63/290 / NCTC 10512) protein is Probable acid stress chaperone HdeA.